The sequence spans 192 residues: Imidazole glycerol phosphate synthase subunit HisH (192 aa).

A Glutamine amidotransferase type-1 domain is found at 1–192 (MIVIVDYGLG…QAIQGGFIND (192 aa)). Residue cysteine 77 is the Nucleophile of the active site. Active-site residues include histidine 169 and glutamate 171.

As to quaternary structure, heterodimer of HisH and HisF.

It is found in the cytoplasm. It catalyses the reaction 5-[(5-phospho-1-deoxy-D-ribulos-1-ylimino)methylamino]-1-(5-phospho-beta-D-ribosyl)imidazole-4-carboxamide + L-glutamine = D-erythro-1-(imidazol-4-yl)glycerol 3-phosphate + 5-amino-1-(5-phospho-beta-D-ribosyl)imidazole-4-carboxamide + L-glutamate + H(+). The catalysed reaction is L-glutamine + H2O = L-glutamate + NH4(+). The protein operates within amino-acid biosynthesis; L-histidine biosynthesis; L-histidine from 5-phospho-alpha-D-ribose 1-diphosphate: step 5/9. In terms of biological role, IGPS catalyzes the conversion of PRFAR and glutamine to IGP, AICAR and glutamate. The HisH subunit catalyzes the hydrolysis of glutamine to glutamate and ammonia as part of the synthesis of IGP and AICAR. The resulting ammonia molecule is channeled to the active site of HisF. In Staphylococcus aureus (strain bovine RF122 / ET3-1), this protein is Imidazole glycerol phosphate synthase subunit HisH.